A 92-amino-acid chain; its full sequence is Integration host factor subunit beta (92 aa).

It belongs to the bacterial histone-like protein family. Heterodimer of an alpha and a beta chain.

Functionally, this protein is one of the two subunits of integration host factor, a specific DNA-binding protein that functions in genetic recombination as well as in transcriptional and translational control. The polypeptide is Integration host factor subunit beta (Azotobacter vinelandii (strain DJ / ATCC BAA-1303)).